Consider the following 152-residue polypeptide: Globin, minor (152 aa).

One can recognise a Globin domain in the interval 12–152; it reads VNNSYHKDLL…ALIAVVQAAL (141 aa). Histidine 104 is a heme b binding site.

It belongs to the globin family.

This Anadara trapezia (Sydney cockle) protein is Globin, minor.